The following is a 218-amino-acid chain: Oocyte-specific homeobox protein 7 (218 aa).

The span at 40 to 72 (SPLVTPGSTMQSSLSVPERNLLQQESEGPSRQS) shows a compositional bias: polar residues. Positions 40–77 (SPLVTPGSTMQSSLSVPERNLLQQESEGPSRQSGCMPL) are disordered. The segment at residues 94-153 (FRKERIVYSKEQQRLLQKHFDECQYPKEKKIVELAVLIGVTKMEIKKWFKNNRAKYRQMN) is a DNA-binding region (homeobox).

This sequence belongs to the paired homeobox family. Obox subfamily. Specifically expressed in oocytes and early embryos.

It is found in the nucleus. Transcription factor required for zygotic genome activation (ZGA), a critical event in early embryonic development during which the developmental control passes from maternally provided mRNAs to the expression of the zygotic genome after fertilization. Together with other Obox family members, required in early two-cell stage embryos to kick-start the major ZGA wave by facilitating RNA Polymerase II 'pre-configuration', during which RNA Polymerase II relocates from the initial one-cell stage binding targets to ZGA gene promoters and distal enhancers. Mechanistically, promotes recruitment of RNA Polymerase II from (CG-rich) non-ZGA genes to (CG-poor) ZGA genes at the two-cell stage. Binds to regulatory DNA sequences containing a 5'-ACNCCTTTAATCCCAG-3' sequence motif. Most maternal and zygotic Obox family proteins can compensate for one another. The sequence is that of Oocyte-specific homeobox protein 7 from Mus musculus (Mouse).